A 267-amino-acid polypeptide reads, in one-letter code: Dynein axonemal assembly factor 19 homolog (267 aa).

Disordered regions lie at residues 86–111 and 226–250; these read ISQS…RDWR and HQGK…VDPC.

This sequence belongs to the DNAAF19/PR46b family. Homodimer.

The protein resides in the cytoplasm. The protein localises to the cell projection. It is found in the cilium. Its subcellular location is the flagellum. Its function is as follows. Dynein-attachment factor required for cilia motility. The chain is Dynein axonemal assembly factor 19 homolog (PR46b) from Chlamydomonas reinhardtii (Chlamydomonas smithii).